Here is a 159-residue protein sequence, read N- to C-terminus: MKCTLVSTLFAITNILVAHAQVSNSSDTLDVQFANSTNSYIEGKFNSTDEAFNSSASWSLAAQQKKISNAAVYDVGGWNGSLYRSNRSAVADHQPGKKQDAAISQISDGQIQATASGPETTAATTPSSTANVSVYEGAGMKVESKNMGYIVGVAALLFL.

Positions 1–20 (MKCTLVSTLFAITNILVAHA) are cleaved as a signal peptide. A PIR1/2/3 repeat occupies 101–114 (AAISQISDGQIQAT). Gly-137 is lipidated: GPI-anchor amidated glycine. A propeptide spans 138 to 159 (AGMKVESKNMGYIVGVAALLFL) (removed in mature form).

It is found in the cell membrane. This Saccharomyces cerevisiae (strain ATCC 204508 / S288c) (Baker's yeast) protein is Probable GPI-anchored protein ANS1 (ANS1).